We begin with the raw amino-acid sequence, 241 residues long: Venom nerve growth factor (241 aa).

Positions 1–18 (MSMLCYTLIIAFLIGIWA) are cleaved as a signal peptide. The propeptide occupies 19-122 (APKSEDNVPL…SLNRNIRAKR (104 aa)). Intrachain disulfides connect Cys136-Cys201, Cys179-Cys229, and Cys189-Cys231. An N-linked (GlcNAc...) asparagine glycan is attached at Asn145.

Belongs to the NGF-beta family. As to quaternary structure, homodimer; non-covalently linked. As to expression, expressed by the venom gland.

Its subcellular location is the secreted. Functionally, nerve growth factor is important for the development and maintenance of the sympathetic and sensory nervous systems. It stimulates division and differentiation of sympathetic and embryonic sensory neurons as well as basal forebrain cholinergic neurons in the brain. Its relevance in the snake venom is not clear. However, it has been shown to inhibit metalloproteinase-dependent proteolysis of platelet glycoprotein Ib alpha, suggesting a metalloproteinase inhibition to prevent metalloprotease autodigestion and/or protection against prey proteases. Binds a lipid between the two protein chains in the homodimer. The lipid-bound form promotes histamine relase from mouse mast cells, contrary to the lipid-free form. This is Venom nerve growth factor from Crotalus durissus terrificus (South American rattlesnake).